Consider the following 73-residue polypeptide: Beta-1 adrenergic receptor (73 aa).

Residues 1-12 form a helical membrane-spanning segment; the sequence is ISALVSFLPILM. The Extracellular segment spans residues 13-38; sequence HWWRAENDEARRCYNDPKCCDFVTNR. C25 and C31 are oxidised to a cystine. Residues 39-64 traverse the membrane as a helical segment; sequence AYAIASSVVSFYVPLCIMAFVYLRVF. Position 44 (S44) interacts with cyanopindolol. Residues 65-73 are Cytoplasmic-facing; sequence REAQKQVKK.

This sequence belongs to the G-protein coupled receptor 1 family. Adrenergic receptor subfamily. ADRB1 sub-subfamily. As to quaternary structure, interacts (via C-terminus PDZ motif) with RAPGEF2; the interaction is direct. Interacts with GOPC, MAGI3 and DLG4. In terms of processing, homologous desensitization of the receptor is mediated by its phosphorylation by beta-adrenergic receptor kinase.

Its subcellular location is the cell membrane. It is found in the early endosome. Beta-adrenergic receptors mediate the catecholamine-induced activation of adenylate cyclase through the action of G proteins. This receptor binds epinephrine and norepinephrine with approximately equal affinity. Mediates Ras activation through G(s)-alpha- and cAMP-mediated signaling. In dorsal pons neurons, involved in the regulation of sleep/wake behaviors. This Meriones unguiculatus (Mongolian jird) protein is Beta-1 adrenergic receptor (ADRB1).